A 142-amino-acid chain; its full sequence is Large ribosomal subunit protein uL11 (142 aa).

The protein belongs to the universal ribosomal protein uL11 family. As to quaternary structure, part of the ribosomal stalk of the 50S ribosomal subunit. Interacts with L10 and the large rRNA to form the base of the stalk. L10 forms an elongated spine to which L12 dimers bind in a sequential fashion forming a multimeric L10(L12)X complex. Post-translationally, one or more lysine residues are methylated.

Functionally, forms part of the ribosomal stalk which helps the ribosome interact with GTP-bound translation factors. The polypeptide is Large ribosomal subunit protein uL11 (Mesorhizobium japonicum (strain LMG 29417 / CECT 9101 / MAFF 303099) (Mesorhizobium loti (strain MAFF 303099))).